We begin with the raw amino-acid sequence, 134 residues long: Protein NrdI (134 aa).

This sequence belongs to the NrdI family.

In terms of biological role, probably involved in ribonucleotide reductase function. This chain is Protein NrdI, found in Rhizobium leguminosarum bv. trifolii (strain WSM2304).